An 874-amino-acid polypeptide reads, in one-letter code: MKSAEIREAFLRFFEEQGHTRVASSSLIPNNDPTLLFTNAGMNQFKDCFLGAEKRAYTRAVSSQKCVRAGGKHNDLENVGYTARHHTFFEMLGNFSFGDYFKRDAITFAWTFLTSDKWLNLPKEKLWVTVYASDDEAYDIWTKEVGVPAERMVRIGDNKGAPYASDNFWTMGDTGPCGPCTEIFYDHGADIWGGPPGSPEEDGDRYIEIWNNVFMQFNRTADGVLHPLPAPSVDTGMGLERISAVMQHVHSNYEIDLFQNLLSAAAKAIGCSNDGQASLKVVADHIRSCGFLIADGVLPSNEGRGYVLRRIIRRACRHGNKLGAKGSFFYQIVAALAAEMGEAFPELKSQQAHIERVLKAEEEQFAKTLEQGLRILEQDLAQLKGDVVPGDVVFKLYDTYGFPMDLTADIARERELTIDEAGFEREMDAQRERARSASAFGMDYNSLVKVDTATDFVGYNATEGQGKVIALYKDGQSVDQLGEGEQGVVVLDRTPFYAESGGQVGDTGYLQSGAVRFDVQDTTKTGGAFLHHGVVASGALVIGSPVEAKVDADVQHATSLNHSATHLLHEALRQVLGEHVQQKGSLVDSQRLRFDFSHFEAVTPAQIKALEDIVNREVRKNTPVETEITDIETAKRKGAMALFGEKYGDTVRVLSMGGDFSVELCGGIHAKRTGDISLFKIISEGGVASGVRRIEAVTGAAALAYLNAAEEQVKEAAQLIKGNRDNLIDKLSAVLERNRQLEKQLEQLQAKAASAAGDDLSSAAVEVKGAKVLAARLDGQDGKALLALVDQLKNKLGHAVILLGSEHEGKVVLVAGVTKDLSSQLKAGDLMKQAAAAVGGKGGGRPDMAQGGGVDVAALDQALALAVPFAEQGL.

Residues His-562, His-566, Cys-665, and His-669 each contribute to the Zn(2+) site.

Belongs to the class-II aminoacyl-tRNA synthetase family. Requires Zn(2+) as cofactor.

The protein localises to the cytoplasm. It catalyses the reaction tRNA(Ala) + L-alanine + ATP = L-alanyl-tRNA(Ala) + AMP + diphosphate. Catalyzes the attachment of alanine to tRNA(Ala) in a two-step reaction: alanine is first activated by ATP to form Ala-AMP and then transferred to the acceptor end of tRNA(Ala). Also edits incorrectly charged Ser-tRNA(Ala) and Gly-tRNA(Ala) via its editing domain. The protein is Alanine--tRNA ligase of Pseudomonas putida (strain W619).